The sequence spans 238 residues: MQFKPALESATLLKRYKRFLADIEFDNGEVRTIHCANTGAMTGCATPGNKVWFSTSDNPKRKYPNSWELSETEQGHRICINTARANQLAVEAIENNVISELCGYDTLQTEVKYGNENSRIDILLSASDKPKCYIEVKSVTLLDETGSAGQGYFPDAVTTRGQKHLRELTEMAQNGSRAILLFTVLHSGIEKVSAAHHIDAKYSLLLKQAQDAGVEVLCYKAELSNTEMKLISAIDFIN.

It belongs to the SfsA family.

The polypeptide is Sugar fermentation stimulation protein homolog (Vibrio parahaemolyticus serotype O3:K6 (strain RIMD 2210633)).